The following is a 209-amino-acid chain: Segregation and condensation protein B (209 aa).

The protein belongs to the ScpB family. As to quaternary structure, homodimer. Homodimerization may be required to stabilize the binding of ScpA to the Smc head domains. Component of a cohesin-like complex composed of ScpA, ScpB and the Smc homodimer, in which ScpA and ScpB bind to the head domain of Smc. The presence of the three proteins is required for the association of the complex with DNA.

The protein localises to the cytoplasm. In terms of biological role, participates in chromosomal partition during cell division. May act via the formation of a condensin-like complex containing Smc and ScpA that pull DNA away from mid-cell into both cell halves. This is Segregation and condensation protein B from Geobacillus thermodenitrificans (strain NG80-2).